We begin with the raw amino-acid sequence, 472 residues long: Alkaline phosphatase (472 aa).

Residues M1–A21 form the signal peptide. D74 provides a ligand contact to Mg(2+). A Zn(2+)-binding site is contributed by D74. The Phosphoserine intermediate role is filled by S125. Residues D176 and T178 each coordinate Mg(2+). Intrachain disulfides connect C191–C201 and C309–C359. E345 is a binding site for Mg(2+). Zn(2+) contacts are provided by D350, H354, D392, H393, and H435.

It belongs to the alkaline phosphatase family. As to quaternary structure, homodimer. The cofactor is Mg(2+). Zn(2+) serves as cofactor.

The protein resides in the periplasm. It catalyses the reaction a phosphate monoester + H2O = an alcohol + phosphate. In Escherichia fergusonii (strain ATCC 35469 / DSM 13698 / CCUG 18766 / IAM 14443 / JCM 21226 / LMG 7866 / NBRC 102419 / NCTC 12128 / CDC 0568-73), this protein is Alkaline phosphatase (phoA).